Consider the following 662-residue polypeptide: Threonine--tRNA ligase (662 aa).

The region spanning 1 to 64 is the TGS domain; the sequence is MSQSVSLTFP…ADGKIEIITR (64 aa). The interval 245-547 is catalytic; the sequence is DHRRLGREMD…LIENFAGHMP (303 aa). Residues C341, H392, and H524 each coordinate Zn(2+).

Belongs to the class-II aminoacyl-tRNA synthetase family. In terms of assembly, homodimer. The cofactor is Zn(2+).

It localises to the cytoplasm. It carries out the reaction tRNA(Thr) + L-threonine + ATP = L-threonyl-tRNA(Thr) + AMP + diphosphate + H(+). Catalyzes the attachment of threonine to tRNA(Thr) in a two-step reaction: L-threonine is first activated by ATP to form Thr-AMP and then transferred to the acceptor end of tRNA(Thr). Also edits incorrectly charged L-seryl-tRNA(Thr). This chain is Threonine--tRNA ligase, found in Rhizobium rhizogenes (strain K84 / ATCC BAA-868) (Agrobacterium radiobacter).